A 217-amino-acid polypeptide reads, in one-letter code: tRNA (guanine-N(7)-)-methyltransferase (217 aa).

Residues glutamate 44, glutamate 69, asparagine 96, and aspartate 118 each coordinate S-adenosyl-L-methionine. Residue aspartate 118 is part of the active site. A substrate-binding site is contributed by lysine 122. Positions 124–129 are interaction with RNA; the sequence is RHEKRR. Residues aspartate 154 and 191–194 contribute to the substrate site; that span reads TEYE.

The protein belongs to the class I-like SAM-binding methyltransferase superfamily. TrmB family.

The catalysed reaction is guanosine(46) in tRNA + S-adenosyl-L-methionine = N(7)-methylguanosine(46) in tRNA + S-adenosyl-L-homocysteine. It participates in tRNA modification; N(7)-methylguanine-tRNA biosynthesis. Its function is as follows. Catalyzes the formation of N(7)-methylguanine at position 46 (m7G46) in tRNA. The protein is tRNA (guanine-N(7)-)-methyltransferase of Geobacillus kaustophilus (strain HTA426).